The following is a 92-amino-acid chain: Small ribosomal subunit protein uS19 (92 aa).

This sequence belongs to the universal ribosomal protein uS19 family.

Functionally, protein S19 forms a complex with S13 that binds strongly to the 16S ribosomal RNA. In Mycoplasmopsis synoviae (strain 53) (Mycoplasma synoviae), this protein is Small ribosomal subunit protein uS19.